The chain runs to 332 residues: MKKIGVLTSGGDAPGMNAAIRSVVRTGIYHGLDVVGIRRGYAGLIEGDFYLMDRGSVADIIQRGGTILLSARCEEFKTEEGRQKALKKMKEEGIEGLVVIGGDGSFRGAEKVSKELGIPAIGIPGTIDNDLACTDFTIGFDTAMNTIIDTINKIRDTATSHERTFVVETMGRRSGFLTLMAGLAGGAESILIPEIDFDLDDVSQKLKKGYERGKLHSIILVAEGVGDDFSTNRDINHSKAFVIGKQIAEKTGLETRVIILGHIQRGGSPTAMDRILASRMGSKAVELLLASESNKMVGYVNNKLVTCDISEALSKEKQVEKDVYKLANILSM.

An ATP-binding site is contributed by Gly11. 21-25 (RSVVR) serves as a coordination point for ADP. Residues 72–73 (RC) and 102–105 (GDGS) contribute to the ATP site. Asp103 lines the Mg(2+) pocket. 126 to 128 (TID) is a substrate binding site. Asp128 serves as the catalytic Proton acceptor. ADP is bound at residue Arg155. Residues Arg163 and 170–172 (MGR) contribute to the substrate site. ADP-binding positions include 186 to 188 (GAE), Arg212, and 214 to 216 (KLH). Substrate-binding positions include Glu223, Arg256, and 262–265 (HIQR).

Belongs to the phosphofructokinase type A (PFKA) family. ATP-dependent PFK group I subfamily. Prokaryotic clade 'B1' sub-subfamily. In terms of assembly, homotetramer. Mg(2+) is required as a cofactor.

The protein resides in the cytoplasm. The catalysed reaction is beta-D-fructose 6-phosphate + ATP = beta-D-fructose 1,6-bisphosphate + ADP + H(+). It functions in the pathway carbohydrate degradation; glycolysis; D-glyceraldehyde 3-phosphate and glycerone phosphate from D-glucose: step 3/4. With respect to regulation, allosterically activated by ADP and other diphosphonucleosides, and allosterically inhibited by phosphoenolpyruvate. Functionally, catalyzes the phosphorylation of D-fructose 6-phosphate to fructose 1,6-bisphosphate by ATP, the first committing step of glycolysis. This chain is ATP-dependent 6-phosphofructokinase, found in Halothermothrix orenii (strain H 168 / OCM 544 / DSM 9562).